Reading from the N-terminus, the 362-residue chain is Probable dual-specificity RNA methyltransferase RlmN (362 aa).

The active-site Proton acceptor is E105. A Radical SAM core domain is found at 111 to 344 (HNYGNSVCVT…VTIRREQGHD (234 aa)). C118 and C349 form a disulfide bridge. C125, C129, and C132 together coordinate [4Fe-4S] cluster. S-adenosyl-L-methionine contacts are provided by residues 175 to 176 (GE), S207, 230 to 232 (SLH), and N306. C349 serves as the catalytic S-methylcysteine intermediate.

The protein belongs to the radical SAM superfamily. RlmN family. The cofactor is [4Fe-4S] cluster.

The protein resides in the cytoplasm. The enzyme catalyses adenosine(2503) in 23S rRNA + 2 reduced [2Fe-2S]-[ferredoxin] + 2 S-adenosyl-L-methionine = 2-methyladenosine(2503) in 23S rRNA + 5'-deoxyadenosine + L-methionine + 2 oxidized [2Fe-2S]-[ferredoxin] + S-adenosyl-L-homocysteine. The catalysed reaction is adenosine(37) in tRNA + 2 reduced [2Fe-2S]-[ferredoxin] + 2 S-adenosyl-L-methionine = 2-methyladenosine(37) in tRNA + 5'-deoxyadenosine + L-methionine + 2 oxidized [2Fe-2S]-[ferredoxin] + S-adenosyl-L-homocysteine. In terms of biological role, specifically methylates position 2 of adenine 2503 in 23S rRNA and position 2 of adenine 37 in tRNAs. The protein is Probable dual-specificity RNA methyltransferase RlmN of Halalkalibacterium halodurans (strain ATCC BAA-125 / DSM 18197 / FERM 7344 / JCM 9153 / C-125) (Bacillus halodurans).